The following is a 277-amino-acid chain: Undecaprenyl-diphosphatase (277 aa).

The next 5 membrane-spanning stretches (helical) occupy residues 85-105 (VNIV…AGAI), 109-129 (LFAP…ILWV), 188-208 (ATEF…VYSV), 218-238 (ADIP…FLCV), and 256-276 (YRIG…VVWA).

Belongs to the UppP family.

It localises to the cell inner membrane. It catalyses the reaction di-trans,octa-cis-undecaprenyl diphosphate + H2O = di-trans,octa-cis-undecaprenyl phosphate + phosphate + H(+). Its function is as follows. Catalyzes the dephosphorylation of undecaprenyl diphosphate (UPP). Confers resistance to bacitracin. This chain is Undecaprenyl-diphosphatase, found in Herminiimonas arsenicoxydans.